The sequence spans 255 residues: H-2 class II histocompatibility antigen, E-U alpha chain (255 aa).

A signal peptide spans 1-25; that stretch reads MATIGALLLRFFFIAVLMSSQKSWA. The interval 26–109 is alpha-1; it reads IKEEHTIIQA…KRSNNTPDAN (84 aa). At 26 to 217 the chain is on the extracellular side; the sequence is IKEEHTIIQA…KTLLPETKEN (192 aa). The segment at 110–203 is alpha-2; sequence VAPEVTVLSR…GLEEPLRKHW (94 aa). An Ig-like C1-type domain is found at 112 to 204; the sequence is PEVTVLSRSP…LEEPLRKHWE (93 aa). Residues Cys132 and Cys188 are joined by a disulfide bond. A glycan (N-linked (GlcNAc...) asparagine) is linked at Asn143. The interval 204–216 is connecting peptide; sequence EFEEKTLLPETKE. A helical transmembrane segment spans residues 218 to 238; sequence VVCALGLFVGLVGIVVGIILI. Over 239–255 the chain is Cytoplasmic; the sequence is MKGIKKRNVVERRQGAL.

This sequence belongs to the MHC class II family.

The protein localises to the membrane. The polypeptide is H-2 class II histocompatibility antigen, E-U alpha chain (H2-Ea) (Mus musculus (Mouse)).